The sequence spans 36 residues: Kappa-theraphotoxin-Pg1b (36 aa).

Disulfide bonds link C4–C19, C11–C24, and C18–C31.

This sequence belongs to the neurotoxin 10 (Hwtx-1) family. 44 (Jztx-4) subfamily. As to expression, expressed by the venom gland.

The protein resides in the secreted. Functionally, gating modifier of Kv2.1/KCNB1, Kv2.2/KCNB2 and Kv4.3/KCND3 channels. The chain is Kappa-theraphotoxin-Pg1b from Chilobrachys guangxiensis (Chinese earth tiger tarantula).